The sequence spans 292 residues: NAD kinase (292 aa).

Catalysis depends on aspartate 73, which acts as the Proton acceptor. NAD(+) contacts are provided by residues 73 to 74 (DG), 147 to 148 (NE), histidine 158, arginine 175, aspartate 177, 188 to 193 (TGYSLS), and glutamine 247.

It belongs to the NAD kinase family. A divalent metal cation serves as cofactor.

Its subcellular location is the cytoplasm. The enzyme catalyses NAD(+) + ATP = ADP + NADP(+) + H(+). Its function is as follows. Involved in the regulation of the intracellular balance of NAD and NADP, and is a key enzyme in the biosynthesis of NADP. Catalyzes specifically the phosphorylation on 2'-hydroxyl of the adenosine moiety of NAD to yield NADP. In Buchnera aphidicola subsp. Acyrthosiphon pisum (strain 5A), this protein is NAD kinase.